The following is a 188-amino-acid chain: Pyridoxal 5'-phosphate synthase subunit PdxT (188 aa).

47–49 (GES) is an L-glutamine binding site. The active-site Nucleophile is the Cys79. Residues Arg106 and 134 to 135 (IR) contribute to the L-glutamine site. Catalysis depends on charge relay system residues His169 and Glu171.

The protein belongs to the glutaminase PdxT/SNO family. In the presence of PdxS, forms a dodecamer of heterodimers. Only shows activity in the heterodimer.

It carries out the reaction aldehydo-D-ribose 5-phosphate + D-glyceraldehyde 3-phosphate + L-glutamine = pyridoxal 5'-phosphate + L-glutamate + phosphate + 3 H2O + H(+). It catalyses the reaction L-glutamine + H2O = L-glutamate + NH4(+). The protein operates within cofactor biosynthesis; pyridoxal 5'-phosphate biosynthesis. Catalyzes the hydrolysis of glutamine to glutamate and ammonia as part of the biosynthesis of pyridoxal 5'-phosphate. The resulting ammonia molecule is channeled to the active site of PdxS. The polypeptide is Pyridoxal 5'-phosphate synthase subunit PdxT (Caldicellulosiruptor saccharolyticus (strain ATCC 43494 / DSM 8903 / Tp8T 6331)).